The primary structure comprises 414 residues: 5-aminolevulinate synthase (414 aa).

3 residues coordinate substrate: arginine 22, serine 133, and lysine 152. Residues serine 185, histidine 213, and threonine 241 each coordinate pyridoxal 5'-phosphate. The active site involves lysine 244. Lysine 244 is modified (N6-(pyridoxal phosphate)lysine). Residues threonine 273 and threonine 274 each contribute to the pyridoxal 5'-phosphate site. Threonine 359 lines the substrate pocket.

This sequence belongs to the class-II pyridoxal-phosphate-dependent aminotransferase family. Homodimer. Pyridoxal 5'-phosphate serves as cofactor.

The catalysed reaction is succinyl-CoA + glycine + H(+) = 5-aminolevulinate + CO2 + CoA. Its pathway is porphyrin-containing compound metabolism; protoporphyrin-IX biosynthesis; 5-aminolevulinate from glycine: step 1/1. The chain is 5-aminolevulinate synthase (hemA) from Rickettsia conorii (strain ATCC VR-613 / Malish 7).